The primary structure comprises 368 residues: Left-right determination factor 1 (368 aa).

Residues 1–21 form the signal peptide; that stretch reads MPFLWLCWALWALSLVSLREA. A propeptide spans 22 to 76 (or 135); the sequence is LTGEQILGSLLQQLQLDQPPVLDKADVEGMVIPSHVRTQYVALLQHSHASRSRGK. N-linked (GlcNAc...) asparagine glycosylation is present at N158. 4 disulfides stabilise this stretch: C253/C266, C265/C318, C295/C353, and C299/C355.

This sequence belongs to the TGF-beta family. In terms of processing, the processing of the protein may also occur at the second R-X-X-R site located at AA 132-135. Processing appears to be regulated in a cell-type specific manner.

It localises to the secreted. Its function is as follows. Required for left-right axis determination as a regulator of LEFTY2 and NODAL. The polypeptide is Left-right determination factor 1 (Lefty1) (Mus musculus (Mouse)).